The primary structure comprises 359 residues: DNA integrity scanning protein DisA (359 aa).

Positions 10–148 (ELDLLDIVQF…GNRRYTLKDI (139 aa)) constitute a DAC domain. ATP contacts are provided by residues Gly77, Leu95, and 108 to 112 (MRHRT).

It belongs to the DisA family. Homooctamer. Mg(2+) serves as cofactor.

The catalysed reaction is 2 ATP = 3',3'-c-di-AMP + 2 diphosphate. Its function is as follows. Participates in a DNA-damage check-point that is active prior to asymmetric division when DNA is damaged. DisA forms globular foci that rapidly scan along the chromosomes during sporulation, searching for lesions. When a lesion is present, DisA pauses at the lesion site. This triggers a cellular response that culminates in a temporary block in sporulation initiation. In terms of biological role, also has diadenylate cyclase activity, catalyzing the condensation of 2 ATP molecules into cyclic di-AMP (c-di-AMP). c-di-AMP acts as a signaling molecule that couples DNA integrity with progression of sporulation. The rise in c-di-AMP level generated by DisA while scanning the chromosome, operates as a positive signal that advances sporulation; upon encountering a lesion, the DisA focus arrests at the damaged site and halts c-di-AMP synthesis. The chain is DNA integrity scanning protein DisA from Bacillus pumilus (strain SAFR-032).